The following is a 285-amino-acid chain: Pantothenate synthetase (285 aa).

Methionine 30 to histidine 37 serves as a coordination point for ATP. Catalysis depends on histidine 37, which acts as the Proton donor. Glutamine 61 serves as a coordination point for (R)-pantoate. A beta-alanine-binding site is contributed by glutamine 61. Residue glycine 149 to aspartate 152 participates in ATP binding. Glutamine 155 contributes to the (R)-pantoate binding site. Residues isoleucine 178 and phenylalanine 186–arginine 189 contribute to the ATP site.

This sequence belongs to the pantothenate synthetase family. In terms of assembly, homodimer.

It is found in the cytoplasm. It carries out the reaction (R)-pantoate + beta-alanine + ATP = (R)-pantothenate + AMP + diphosphate + H(+). It participates in cofactor biosynthesis; (R)-pantothenate biosynthesis; (R)-pantothenate from (R)-pantoate and beta-alanine: step 1/1. In terms of biological role, catalyzes the condensation of pantoate with beta-alanine in an ATP-dependent reaction via a pantoyl-adenylate intermediate. In Buchnera aphidicola subsp. Schizaphis graminum (strain Sg), this protein is Pantothenate synthetase.